The primary structure comprises 216 residues: Uridine kinase (216 aa).

16–23 contributes to the ATP binding site; the sequence is GASASGKS.

It belongs to the uridine kinase family.

The protein resides in the cytoplasm. It carries out the reaction uridine + ATP = UMP + ADP + H(+). It catalyses the reaction cytidine + ATP = CMP + ADP + H(+). Its pathway is pyrimidine metabolism; CTP biosynthesis via salvage pathway; CTP from cytidine: step 1/3. The protein operates within pyrimidine metabolism; UMP biosynthesis via salvage pathway; UMP from uridine: step 1/1. This chain is Uridine kinase, found in Mannheimia succiniciproducens (strain KCTC 0769BP / MBEL55E).